We begin with the raw amino-acid sequence, 152 residues long: Superoxide dismutase [Cu-Zn] 1 (152 aa).

Cu cation contacts are provided by H45, H47, and H62. An intrachain disulfide couples C56 to C145. Residues H62, H70, H79, and D82 each contribute to the Zn(2+) site. Residue H119 participates in Cu cation binding.

Belongs to the Cu-Zn superoxide dismutase family. As to quaternary structure, homodimer. Interacts with DJ1A and CCS. It depends on Cu cation as a cofactor. Requires Zn(2+) as cofactor. In terms of tissue distribution, expressed in leaves (at protein level). The spatial localization is regulated by miR398-mediated silencing. Mostly present in flowers, old rosette leaves and inflorescence, and, to a lower extent, in cauline leaves, stems and roots.

It localises to the cytoplasm. The protein resides in the cytosol. It is found in the nucleus. It carries out the reaction 2 superoxide + 2 H(+) = H2O2 + O2. Functionally, destroys radicals which are normally produced within the cells and which are toxic to biological systems. The chain is Superoxide dismutase [Cu-Zn] 1 (CSD1) from Arabidopsis thaliana (Mouse-ear cress).